Consider the following 330-residue polypeptide: Complement factor H-related protein 1 (330 aa).

Residues 1 to 18 form the signal peptide; it reads MWLLVSVILISRISSVGG. Sushi domains lie at 22 to 84, 85 to 142, 145 to 203, 206 to 264, and 273 to 329; these read FCDF…PKCL, RLCF…KCRS, TSCV…QCKD, GKCG…KCLH, and MENY…TCAK. 10 disulfide bridges follow: cysteine 23–cysteine 72, cysteine 55–cysteine 83, cysteine 87–cysteine 129, cysteine 114–cysteine 140, cysteine 147–cysteine 190, cysteine 176–cysteine 201, cysteine 208–cysteine 251, cysteine 237–cysteine 262, cysteine 266–cysteine 317, and cysteine 300–cysteine 327. Residue asparagine 126 is glycosylated (N-linked (GlcNAc...) asparagine). N-linked (GlcNAc...) asparagine glycosylation is present at asparagine 194.

In terms of assembly, head-to-tail homodimer and heterodimer with CFHR2 or CFHR5. As to quaternary structure, (Microbial infection) Interacts with C.albicans GPD2; the interaction is direct and leads to the degradation of C3. In terms of processing, N-glycosylated. Two forms are observed; one with a single side chain and the other with two. As to expression, expressed by the liver and secreted in plasma.

Its subcellular location is the secreted. Functionally, involved in complement regulation. The dimerized forms have avidity for tissue-bound complement fragments and efficiently compete with the physiological complement inhibitor CFH. Can associate with lipoproteins and may play a role in lipid metabolism. The chain is Complement factor H-related protein 1 (CFHR1) from Homo sapiens (Human).